We begin with the raw amino-acid sequence, 105 residues long: Large ribosomal subunit protein eL36 (105 aa).

An N6-acetyllysine modification is found at lysine 62.

It belongs to the eukaryotic ribosomal protein eL36 family. In terms of assembly, component of the large ribosomal subunit.

The protein resides in the cytoplasm. The protein localises to the cytosol. Its function is as follows. Component of the large ribosomal subunit. The ribosome is a large ribonucleoprotein complex responsible for the synthesis of proteins in the cell. The polypeptide is Large ribosomal subunit protein eL36 (RPL36) (Bos taurus (Bovine)).